An 85-amino-acid polypeptide reads, in one-letter code: Large ribosomal subunit protein bL27 (85 aa).

Residues 1–21 form a disordered region; it reads MAHKKAGGSSRNGRDSEAKRL.

Belongs to the bacterial ribosomal protein bL27 family.

The polypeptide is Large ribosomal subunit protein bL27 (Aeromonas hydrophila subsp. hydrophila (strain ATCC 7966 / DSM 30187 / BCRC 13018 / CCUG 14551 / JCM 1027 / KCTC 2358 / NCIMB 9240 / NCTC 8049)).